The primary structure comprises 213 residues: MAKNYYDITLALAGICQSARLVQQLAHQGHCDGDALHVSLNSIIDMNPSSTLAVFGGSEANLRVGLETLLGVLNASSRQGLNAELTRYTLSLMVLERKLSSAKGALDTLGNRINGLQRQLEHFDLQSETLMSAMAAIYVDVISPLGPRIQVTGSPAVLQSPQVQAKVRATLLAGIRAAVLWHQVGGGRLQLMFSRNRLTTQAKQILAHLTPEL.

Positions 79–126 (QGLNAELTRYTLSLMVLERKLSSAKGALDTLGNRINGLQRQLEHFDLQ) form a coiled coil.

The protein belongs to the HflD family. As to quaternary structure, interacts with CII protein from phage lambda.

Its subcellular location is the cytoplasm. The protein localises to the cell inner membrane. In terms of biological role, negative regulator of phage lambda lysogenization. Contributes to the degradation of the phage regulatory protein CII. Acts probably by holding CII on the membrane surface, away from the target promoters, but close to the FtsH protease. The chain is High frequency lysogenization protein HflD from Escherichia coli O127:H6 (strain E2348/69 / EPEC).